The primary structure comprises 187 residues: Orotate phosphoribosyltransferase (187 aa).

Residues arginine 99, lysine 100, lysine 103, histidine 105, and aspartate 125–serine 133 each bind 5-phospho-alpha-D-ribose 1-diphosphate. Residues threonine 129 and arginine 157 each coordinate orotate.

It belongs to the purine/pyrimidine phosphoribosyltransferase family. PyrE subfamily. As to quaternary structure, homodimer. It depends on Mg(2+) as a cofactor.

The catalysed reaction is orotidine 5'-phosphate + diphosphate = orotate + 5-phospho-alpha-D-ribose 1-diphosphate. It functions in the pathway pyrimidine metabolism; UMP biosynthesis via de novo pathway; UMP from orotate: step 1/2. Its function is as follows. Catalyzes the transfer of a ribosyl phosphate group from 5-phosphoribose 1-diphosphate to orotate, leading to the formation of orotidine monophosphate (OMP). This chain is Orotate phosphoribosyltransferase, found in Leptospira borgpetersenii serovar Hardjo-bovis (strain JB197).